The chain runs to 540 residues: Chaperonin GroEL (540 aa).

Residues 29 to 32 (TLGP), 86 to 90 (DGTTT), G413, 476 to 478 (NAA), and D492 each bind ATP.

Belongs to the chaperonin (HSP60) family. As to quaternary structure, forms a cylinder of 14 subunits composed of two heptameric rings stacked back-to-back. Interacts with the co-chaperonin GroES.

It localises to the cytoplasm. The enzyme catalyses ATP + H2O + a folded polypeptide = ADP + phosphate + an unfolded polypeptide.. Together with its co-chaperonin GroES, plays an essential role in assisting protein folding. The GroEL-GroES system forms a nano-cage that allows encapsulation of the non-native substrate proteins and provides a physical environment optimized to promote and accelerate protein folding. This is Chaperonin GroEL from Streptococcus gordonii (strain Challis / ATCC 35105 / BCRC 15272 / CH1 / DL1 / V288).